Consider the following 510-residue polypeptide: E3 ubiquitin-protein ligase TRIM7 (510 aa).

Residues cysteine 29–arginine 81 form an RING-type zinc finger. At serine 106 the chain carries Phosphoserine; by RPS6KA5. The B box-type zinc finger occupies alanine 124 to leucine 165. Cysteine 129, histidine 132, cysteine 151, and histidine 157 together coordinate Zn(2+). Residues leucine 165–lysine 275 are a coiled coil. The region spanning leucine 323 to proline 510 is the B30.2/SPRY domain.

This sequence belongs to the TRIM/RBCC family. As to quaternary structure, forms homodimers. Interacts with GNIP2. Interacts with GYG1. Interacts with RNF187 (via C-terminus). In terms of processing, phosphorylated at Ser-106 by RPS6KA5/MSK1, which stimulates the ubiquitin ligase activity. Auto-ubiquitinates via 'Lys-63'-linked polyubiquitination. As to expression, highly expressed in antigen-presenting cells.

Its subcellular location is the nucleus. It localises to the cytoplasm. It is found in the golgi apparatus. The catalysed reaction is S-ubiquitinyl-[E2 ubiquitin-conjugating enzyme]-L-cysteine + [acceptor protein]-L-lysine = [E2 ubiquitin-conjugating enzyme]-L-cysteine + N(6)-ubiquitinyl-[acceptor protein]-L-lysine.. It functions in the pathway protein modification; protein ubiquitination. Functionally, E3 ubiquitin-protein ligase that have both tumor-promoting and tumor-suppressing activities and functions in several biological processes including innate immunity, regulation of ferroptosis as well as cell proliferation and migration. Acts as an antiviral effector against multiple viruses by targeting specific viral proteins for ubiquitination and degradation including norovirus NTPase protein. Mechanistically, recognizes the C-terminal glutamine-containing motif generated by viral proteases that process the polyproteins and trigger their ubiquitination and subsequent degradation. Mediates 'Lys-63'-linked polyubiquitination and stabilization of the JUN coactivator RNF187 in response to growth factor signaling via the MEK/ERK pathway, thereby regulating JUN transactivation and cellular proliferation. Promotes the TLR4-mediated signaling activation through its E3 ligase domain leading to production of pro-inflammatory cytokines and type I interferon. Also plays a negative role in the regulation of exogenous cytosolic DNA virus-triggered immune response. Mechanistically, enhances the 'Lys-48'-linked ubiquitination of STING1 leading to its proteasome-dependent degradation. Mediates the ubiquitination of the SIN3-HDAC chromatin remodeling complex component BRMS1. Modulates NCOA4-mediated ferritinophagy and ferroptosis in glioblastoma cells by ubiquitinating NCOA4, leading to its degradation. The protein is E3 ubiquitin-protein ligase TRIM7 (Trim7) of Mus musculus (Mouse).